The sequence spans 875 residues: Alanine--tRNA ligase (875 aa).

H564, H568, C666, and H670 together coordinate Zn(2+).

Belongs to the class-II aminoacyl-tRNA synthetase family. As to quaternary structure, homotetramer. Zn(2+) is required as a cofactor.

It is found in the cytoplasm. The enzyme catalyses tRNA(Ala) + L-alanine + ATP = L-alanyl-tRNA(Ala) + AMP + diphosphate. Catalyzes the attachment of alanine to tRNA(Ala) in a two-step reaction: alanine is first activated by ATP to form Ala-AMP and then transferred to the acceptor end of tRNA(Ala). Also edits incorrectly charged Ser-tRNA(Ala) and Gly-tRNA(Ala) via its editing domain. This Yersinia pseudotuberculosis serotype IB (strain PB1/+) protein is Alanine--tRNA ligase.